Here is a 384-residue protein sequence, read N- to C-terminus: SAGA complex subunit Spt3 (384 aa).

The protein belongs to the SPT3 family. As to quaternary structure, component of the Spt-Ada-Gcn5 acetyltransferase (SAGA) complex consisting of wda/Taf5L, Saf6, Taf9, Taf10b, Taf12, Ada1, Spt3, Spt7, Spt20, Sf3b3, Sf3b5, Nipped-A/Tra1, a histone acetyltransferase (HAT) module made up of Gcn5, Ada2b (Isoform B), Ada3 and Sgf29, and a deubiquitinase (DUB) module made up of not/nonstop, Sgf11 and e(y)2 tethered to SAGA by Atxn7. Taf5 and Taf10, which has partially redundant properties with Taf10b, may also be part of this complex.

It localises to the nucleus. The protein resides in the chromosome. Functionally, component of the transcription regulatory complex SAGA, a multiprotein complex that activates transcription by remodeling chromatin and mediating histone acetylation and deubiquitination. The SAGA complex predominantly acetylates histone H3. Required for oogenesis; involved in transcriptional activation. The protein is SAGA complex subunit Spt3 of Drosophila melanogaster (Fruit fly).